The chain runs to 238 residues: Large ribosomal subunit protein uL1 (238 aa).

It belongs to the universal ribosomal protein uL1 family. As to quaternary structure, part of the 50S ribosomal subunit.

Functionally, binds directly to 23S rRNA. The L1 stalk is quite mobile in the ribosome, and is involved in E site tRNA release. Protein L1 is also a translational repressor protein, it controls the translation of the L11 operon by binding to its mRNA. This is Large ribosomal subunit protein uL1 from Trichodesmium erythraeum (strain IMS101).